Consider the following 52-residue polypeptide: Phospholamban (52 aa).

Methionine 1 carries the post-translational modification N-acetylmethionine. At 1-31 (MEKVQYLTRSAIRRASTIEMPQQARQKLQNL) the chain is on the cytoplasmic side. Serine 16 carries the post-translational modification Phosphoserine; by PKA and DMPK. An involved in HAX1 binding region spans residues 16–22 (STIEMPQ). Threonine 17 carries the phosphothreonine; by CaMK2 modification. The helical transmembrane segment at 32-52 (FINFCLILICLLLICIIVMLL) threads the bilayer. Cysteine 36 carries S-palmitoyl cysteine lipidation.

Belongs to the phospholamban family. As to quaternary structure, homopentamer. Can also form heterooligomers with other sarcoplasmic/endoplasmic reticulum calcium ATPase (SERCA) regulators ARLN, ERLN, SLN and STRIT1/DWORF. Monomer. Interacts with HAX1. Interacts as a monomer with ATP2A2; the interaction decreases ATP2A2 Ca(2+) affinity. Interacts with VMP1; VMP1 competes with PLN and SLN to prevent them from forming an inhibitory complex with ATP2A2. Interacts with S100A1 in a Ca(2+)-dependent manner. Phosphorylation by PKA abolishes the inhibition of ATP2A2-mediated calcium uptake. Phosphorylated at Thr-17 by CaMK2, and in response to beta-adrenergic stimulation. Phosphorylation by DMPK may stimulate sarcoplasmic reticulum calcium uptake in cardiomyocytes. Post-translationally, palmitoylated by ZDHHC16, promoting formation of the homopentamer. In terms of processing, in elongated spermatids, proteolytically cleaved by SPPL2C which modulates intracellular Ca(2+) homeostasis. Heart muscle (at protein level).

It is found in the endoplasmic reticulum membrane. The protein resides in the sarcoplasmic reticulum membrane. The protein localises to the mitochondrion membrane. Its subcellular location is the membrane. Reversibly inhibits the activity of ATP2A2/SERCA2 in cardiac sarcoplasmic reticulum by decreasing the apparent affinity of the ATPase for Ca(2+). Binds preferentially to the ATP-bound E1 conformational form of ATP2A2 which predominates at low Ca(2+) concentrations during the diastolic phase of the cardiac cycle. Inhibits ATP2A2 Ca(2+) affinity by disrupting its allosteric activation by ATP. Modulates the contractility of the heart muscle in response to physiological stimuli via its effects on ATP2A2. Modulates calcium re-uptake during muscle relaxation and plays an important role in calcium homeostasis in the heart muscle. The degree of ATP2A2 inhibition depends on the oligomeric state of PLN. ATP2A2 inhibition is alleviated by PLN phosphorylation. Also inhibits the activity of ATP2A3/SERCA3. Controls intracellular Ca(2+) levels in elongated spermatids and may play a role in germ cell differentiation. In the thalamic reticular nucleus of the brain, plays a role in the regulation of sleep patterns and executive functioning. This is Phospholamban from Homo sapiens (Human).